A 65-amino-acid polypeptide reads, in one-letter code: Large ribosomal subunit protein bL31 (65 aa).

Zn(2+) contacts are provided by Cys-16, Cys-18, Cys-36, and Cys-39.

This sequence belongs to the bacterial ribosomal protein bL31 family. Type A subfamily. In terms of assembly, part of the 50S ribosomal subunit. It depends on Zn(2+) as a cofactor.

Its function is as follows. Binds the 23S rRNA. The sequence is that of Large ribosomal subunit protein bL31 from Brevibacillus brevis (strain 47 / JCM 6285 / NBRC 100599).